We begin with the raw amino-acid sequence, 192 residues long: Peptidyl-tRNA hydrolase (192 aa).

TRNA is bound at residue Tyr17. His22 functions as the Proton acceptor in the catalytic mechanism. Phe67, Asn69, and Asn115 together coordinate tRNA.

The protein belongs to the PTH family. In terms of assembly, monomer.

It localises to the cytoplasm. The enzyme catalyses an N-acyl-L-alpha-aminoacyl-tRNA + H2O = an N-acyl-L-amino acid + a tRNA + H(+). In terms of biological role, hydrolyzes ribosome-free peptidyl-tRNAs (with 1 or more amino acids incorporated), which drop off the ribosome during protein synthesis, or as a result of ribosome stalling. Its function is as follows. Catalyzes the release of premature peptidyl moieties from peptidyl-tRNA molecules trapped in stalled 50S ribosomal subunits, and thus maintains levels of free tRNAs and 50S ribosomes. This Methylobacillus flagellatus (strain ATCC 51484 / DSM 6875 / VKM B-1610 / KT) protein is Peptidyl-tRNA hydrolase.